The chain runs to 473 residues: Digalactosyldiacylglycerol synthase 2, chloroplastic (473 aa).

Interaction with the membrane lipid bilayer regions lie at residues 130 to 148 and 227 to 245; these read LTWFHHGQKWKTKFNYVIG and QPFTKGAYYIGKMVWSKGY.

The protein belongs to the glycosyltransferase group 1 family. Glycosyltransferase 4 subfamily. As to expression, expressed in leaves, flowers and roots, but not in stems and siliques.

It localises to the plastid. The protein resides in the chloroplast outer membrane. The enzyme catalyses a 1,2-diacyl-3-O-(beta-D-galactosyl)-sn-glycerol + UDP-alpha-D-galactose = a 1,2-diacyl-3-O-[alpha-D-galactosyl-(1-&gt;6)-beta-D-galactosyl]-sn-glycerol + UDP + H(+). With respect to regulation, stimulated by anionic phospholipids. Functionally, involved in the synthesis of diacylglycerol galactolipids that are specifically found in thylakoid membranes. Specific for alpha-glycosidic linkages. During phosphate shortage, involved in the biosynthesis of digalactosyldiacylglycerol (DGDG) which rescues the limitation of phospholipids. The sequence is that of Digalactosyldiacylglycerol synthase 2, chloroplastic from Arabidopsis thaliana (Mouse-ear cress).